Reading from the N-terminus, the 564-residue chain is Potassium-transporting ATPase potassium-binding subunit (564 aa).

10 helical membrane passes run 4 to 24 (YDFA…PWLG), 67 to 87 (TLAL…VLLL), 135 to 155 (LGLT…LVVL), 179 to 199 (LYGL…QGVP), 258 to 278 (FEVA…GHYV), 286 to 306 (AILA…LWSE), 382 to 402 (AGLY…GLMI), 420 to 440 (LLVA…AIAA), 487 to 507 (LMIG…ILAL), and 533 to 553 (GLLL…TLAL).

The protein belongs to the KdpA family. In terms of assembly, the system is composed of three essential subunits: KdpA, KdpB and KdpC.

The protein localises to the cell inner membrane. In terms of biological role, part of the high-affinity ATP-driven potassium transport (or Kdp) system, which catalyzes the hydrolysis of ATP coupled with the electrogenic transport of potassium into the cytoplasm. This subunit binds the periplasmic potassium ions and delivers the ions to the membrane domain of KdpB through an intramembrane tunnel. The sequence is that of Potassium-transporting ATPase potassium-binding subunit from Pseudomonas putida (strain ATCC 47054 / DSM 6125 / CFBP 8728 / NCIMB 11950 / KT2440).